We begin with the raw amino-acid sequence, 503 residues long: MPPDTRINKEIMVSWIRKNLLLVLTVSSVVLGALCGFLLRGLQLSPQNIMYISFPGELLMHMLKMMILPLIMSSLISGLAQLDARQSGKLGSLAVTYYMFTTAVAVVTGIFLVLVIHPGDPTIKKEIGTGTEGKTVSTVDTLLDLLRNMFPENVVQATFQQVQTKYIKVRPKVVKNNDSATLAALNNGSLDYVKASVEYTSGMNVLGVIVFCIAIGISLSQLGQEAHVMVQFFVIMDKVIMKLVMTVMWYSPFGIFCLIMGKILEIHDLADTARMLAMYMVTVLSGLAIHSLISLPLIFFVTTKKNPYVFMRGLFQAWITALGTASSSATLPITFNCLEENLGVDRRVTRFVLPVGATINMDGTALYEAVAAIFIAQINGVHLSFGQVVTVSLTATLASIGAASVPSAGLVTMLLVLTAVGLPVKDVSLIVAVDWLLDRIRTSINVLGDAMGAGIVYHYSKADLDAHDRLAATTRSHSIAMNDEKRQLAVYNSLPTDDEKHTH.

Residues 1–18 (MPPDTRINKEIMVSWIRK) lie on the Cytoplasmic side of the membrane. The next 3 helical transmembrane spans lie at 19-39 (NLLL…GFLL), 59-79 (LMHM…ISGL), and 96-116 (TYYM…VLVI). At 117 to 198 (HPGDPTIKKE…SLDYVKASVE (82 aa)) the chain is on the extracellular side. N-linked (GlcNAc...) asparagine glycosylation is found at Asn-177 and Asn-187. 5 helical membrane-spanning segments follow: residues 199-219 (YTSG…GISL), 239-259 (VIMK…FCLI), 281-301 (VTVL…IFFV), 369-389 (AVAA…GQVV), and 400-420 (IGAA…LTAV).

This sequence belongs to the dicarboxylate/amino acid:cation symporter (DAACS) (TC 2.A.23) family.

It localises to the membrane. In terms of biological role, transports L-glutamate and also L- and D-aspartate. Essential for terminating the postsynaptic action of glutamate by rapidly removing released glutamate from the synaptic cleft. Acts as a symport by cotransporting sodium. The sequence is that of Excitatory amino acid transporter (glt-1) from Caenorhabditis elegans.